Here is a 20-residue protein sequence, read N- to C-terminus: MELSLLLFLALLLGLLLLLF.

The protein belongs to the cytochrome P450 family. The cofactor is heme.

It localises to the endoplasmic reticulum membrane. The protein localises to the microsome membrane. It catalyses the reaction an organic molecule + reduced [NADPH--hemoprotein reductase] + O2 = an alcohol + oxidized [NADPH--hemoprotein reductase] + H2O + H(+). Functionally, cytochromes P450 are a group of heme-thiolate monooxygenases. In liver microsomes, this enzyme is involved in an NADPH-dependent electron transport pathway. This isozyme is active upon P.nitroanisole, aniline, D-benzphetamine, delta(9)-tetrahydrocannabinol (THC) and strychnine. The polypeptide is Cytochrome P450IIB (Cavia porcellus (Guinea pig)).